The primary structure comprises 133 residues: ATP synthase epsilon chain, chloroplastic (133 aa).

It belongs to the ATPase epsilon chain family. As to quaternary structure, F-type ATPases have 2 components, CF(1) - the catalytic core - and CF(0) - the membrane proton channel. CF(1) has five subunits: alpha(3), beta(3), gamma(1), delta(1), epsilon(1). CF(0) has three main subunits: a, b and c.

It is found in the plastid. It localises to the chloroplast thylakoid membrane. Its function is as follows. Produces ATP from ADP in the presence of a proton gradient across the membrane. The polypeptide is ATP synthase epsilon chain, chloroplastic (Trieres chinensis (Marine centric diatom)).